Here is a 324-residue protein sequence, read N- to C-terminus: Interactor of constitutive active ROPs 4 (324 aa).

Disordered regions lie at residues 1 to 74, 91 to 156, 175 to 201, and 289 to 324; these read MPKP…SGLE, LAKA…ASKE, SLSE…KAKE, and FVGS…KGQK. Residues 13 to 28 are compositionally biased toward low complexity; sequence QRQSPRLRTSLLSTSS. 3 stretches are compositionally biased toward basic and acidic residues: residues 29-50, 95-106, and 118-156; these read DPHH…DRRS, EAAKKRAQEELH, and PERD…ASKE. Residues 62-266 are a coiled coil; that stretch reads SQKKLGSRIS…ADAAAAVLSG (205 aa). A compositionally biased stretch (basic and acidic residues) spans 313–324; sequence MFGDLWKKKGQK.

The protein belongs to the ICR family. In terms of assembly, interacts with ARAC11 in vitro.

Functionally, acts as a scaffold, mediating interaction of ROPs with different proteins. The polypeptide is Interactor of constitutive active ROPs 4 (ICR4) (Arabidopsis thaliana (Mouse-ear cress)).